Reading from the N-terminus, the 347-residue chain is GMP reductase (347 aa).

Residue 108–131 (ADFVKMQQILALSPGLKFICIDVA) coordinates NADP(+). K(+) contacts are provided by glycine 181 and glycine 183. Catalysis depends on cysteine 186, which acts as the Thioimidate intermediate. 216–239 (IVSDGGCSVPGDVAKAFGGGADFV) serves as a coordination point for NADP(+).

Belongs to the IMPDH/GMPR family. GuaC type 1 subfamily. As to quaternary structure, homotetramer.

It carries out the reaction IMP + NH4(+) + NADP(+) = GMP + NADPH + 2 H(+). In terms of biological role, catalyzes the irreversible NADPH-dependent deamination of GMP to IMP. It functions in the conversion of nucleobase, nucleoside and nucleotide derivatives of G to A nucleotides, and in maintaining the intracellular balance of A and G nucleotides. This is GMP reductase from Serratia proteamaculans (strain 568).